The sequence spans 525 residues: DNA damage-binding protein cmr1 (525 aa).

Residues 34 to 50 (TGVFTSNMPRGTSANQS) are compositionally biased toward polar residues. 3 disordered regions span residues 34–103 (TGVF…ERAK), 214–240 (DASQEKPTSAVKNEDDEDDEDDDDPDP), and 282–301 (TSSVEKYAPESTSDDVPISG). A compositionally biased stretch (basic and acidic residues) spans 83 to 102 (EIAKRKADEEYDRRQEEERA). The WD 1 repeat unit spans residues 182 to 223 (ITPERIYSMTFHPSEAKPVIFAGDKMGHLGILDASQEKPTSA). A compositionally biased stretch (acidic residues) spans 227–239 (EDDEDDEDDDDPD). WD repeat units lie at residues 247–287 (PHTR…SVEK), 339–379 (LSEK…HTDP), 384–425 (EHQS…SSWK), 448–491 (GRWV…LAQL), and 494–525 (DGITAVPAVAVFHRSKNWVAGGTASGKICLWM).

It belongs to the WD repeat DDB2/WDR76 family.

In terms of biological role, DNA-binding protein that binds to both single- and double-stranded DNA. Binds preferentially to UV-damaged DNA. May be involved in DNA-metabolic processes. The sequence is that of DNA damage-binding protein cmr1 from Emericella nidulans (strain FGSC A4 / ATCC 38163 / CBS 112.46 / NRRL 194 / M139) (Aspergillus nidulans).